We begin with the raw amino-acid sequence, 232 residues long: BTB/POZ domain-containing protein KCTD11 (232 aa).

One can recognise a BTB domain in the interval 1-49 (MLGAMFRAGTPMPPNLNSQGGGHYFIDRDGKAFRHILNFLRLGRLDLPR).

As to quaternary structure, homopentamer. Interacts with KCTD6 and KCTD21; KCTD11 and KCTD6 or KCTD21 may associate in pentameric assemblies. Component of the BCR(KCTD11) E3 ubiquitin ligase complex, at least composed of CUL3 and KCTD11 and RBX1. Interacts (via BTB domain) with CUL3; initially a 4:4 stoichiometry has been reported, however, electron microscopy revealed pentameric states of the BTB domain. Higher expression in cerebellum than in whole brain and lower expression in medulloblastoma.

It participates in protein modification; protein ubiquitination. In terms of biological role, plays a role as a marker and a regulator of neuronal differentiation; Up-regulated by a variety of neurogenic signals, such as retinoic acid, epidermal growth factor/EGF and NGFB/nerve growth factor. Induces apoptosis, growth arrest and the expression of cyclin-dependent kinase inhibitor CDKN1B. Plays a role as a tumor repressor and inhibits cell growth and tumorigenicity of medulloblastoma (MDB). Acts as a probable substrate-specific adapter for a BCR (BTB-CUL3-RBX1) E3 ubiquitin-protein ligase complex towards HDAC1. Functions as antagonist of the Hedgehog pathway on cell proliferation and differentiation by affecting the nuclear transfer of transcription factor GLI1, thus maintaining cerebellar granule cells in undifferentiated state, this effect probably occurs via HDAC1 down-regulation, keeping GLI1 acetylated and inactive. When knock-down, Hedgehog antagonism is impaired and proliferation of granule cells is sustained. Activates the caspase cascade. The protein is BTB/POZ domain-containing protein KCTD11 (KCTD11) of Homo sapiens (Human).